The primary structure comprises 717 residues: Ribosomal RNA large subunit methyltransferase K/L (717 aa).

One can recognise a THUMP domain in the interval 43-154 (IGYKACLWSR…KGKANITLDL (112 aa)).

The protein belongs to the methyltransferase superfamily. RlmKL family.

The protein localises to the cytoplasm. It catalyses the reaction guanosine(2445) in 23S rRNA + S-adenosyl-L-methionine = N(2)-methylguanosine(2445) in 23S rRNA + S-adenosyl-L-homocysteine + H(+). It carries out the reaction guanosine(2069) in 23S rRNA + S-adenosyl-L-methionine = N(2)-methylguanosine(2069) in 23S rRNA + S-adenosyl-L-homocysteine + H(+). In terms of biological role, specifically methylates the guanine in position 2445 (m2G2445) and the guanine in position 2069 (m7G2069) of 23S rRNA. The sequence is that of Ribosomal RNA large subunit methyltransferase K/L from Aeromonas hydrophila subsp. hydrophila (strain ATCC 7966 / DSM 30187 / BCRC 13018 / CCUG 14551 / JCM 1027 / KCTC 2358 / NCIMB 9240 / NCTC 8049).